The chain runs to 157 residues: MRVGHGFDIHKFGKIYKPLILGGVHIPYCKGVVSHSDGDVIIHSIIDSLLGASSLGDIGILFPNNDIKYKNINSCILLQVVWNCIKKKYKIGNIDVTLFLEYPKISSYTNKICLCISNCLKCKTDVINIKSKTMEGLGEIGKKKGIASEAVSVLLEI.

Residues aspartate 8 and histidine 10 each contribute to the a divalent metal cation site. Residues 8 to 10 and 35 to 36 contribute to the 4-CDP-2-C-methyl-D-erythritol 2-phosphate site; these read DIH and HS. Histidine 43 provides a ligand contact to a divalent metal cation. 4-CDP-2-C-methyl-D-erythritol 2-phosphate is bound by residues 57-59, 62-66, and lysine 142; these read DIG and FPNND.

Belongs to the IspF family. In terms of assembly, homotrimer. The cofactor is a divalent metal cation.

The catalysed reaction is 4-CDP-2-C-methyl-D-erythritol 2-phosphate = 2-C-methyl-D-erythritol 2,4-cyclic diphosphate + CMP. It functions in the pathway isoprenoid biosynthesis; isopentenyl diphosphate biosynthesis via DXP pathway; isopentenyl diphosphate from 1-deoxy-D-xylulose 5-phosphate: step 4/6. Its function is as follows. Involved in the biosynthesis of isopentenyl diphosphate (IPP) and dimethylallyl diphosphate (DMAPP), two major building blocks of isoprenoid compounds. Catalyzes the conversion of 4-diphosphocytidyl-2-C-methyl-D-erythritol 2-phosphate (CDP-ME2P) to 2-C-methyl-D-erythritol 2,4-cyclodiphosphate (ME-CPP) with a corresponding release of cytidine 5-monophosphate (CMP). The sequence is that of 2-C-methyl-D-erythritol 2,4-cyclodiphosphate synthase from Wigglesworthia glossinidia brevipalpis.